The sequence spans 366 residues: Chorismate synthase (366 aa).

Residue arginine 48 participates in NADP(+) binding. FMN-binding positions include 125-127 (RSS), 241-242 (NA), glycine 285, 300-304 (KPTSS), and arginine 326.

Belongs to the chorismate synthase family. Homotetramer. The cofactor is FMNH2.

It carries out the reaction 5-O-(1-carboxyvinyl)-3-phosphoshikimate = chorismate + phosphate. Its pathway is metabolic intermediate biosynthesis; chorismate biosynthesis; chorismate from D-erythrose 4-phosphate and phosphoenolpyruvate: step 7/7. Its function is as follows. Catalyzes the anti-1,4-elimination of the C-3 phosphate and the C-6 proR hydrogen from 5-enolpyruvylshikimate-3-phosphate (EPSP) to yield chorismate, which is the branch point compound that serves as the starting substrate for the three terminal pathways of aromatic amino acid biosynthesis. This reaction introduces a second double bond into the aromatic ring system. This is Chorismate synthase from Roseobacter denitrificans (strain ATCC 33942 / OCh 114) (Erythrobacter sp. (strain OCh 114)).